The chain runs to 239 residues: tRNA (guanine-N(1)-)-methyltransferase (239 aa).

Residues Gly-112 and 132–137 (IGDYVL) contribute to the S-adenosyl-L-methionine site.

The protein belongs to the RNA methyltransferase TrmD family. In terms of assembly, homodimer.

The protein localises to the cytoplasm. The enzyme catalyses guanosine(37) in tRNA + S-adenosyl-L-methionine = N(1)-methylguanosine(37) in tRNA + S-adenosyl-L-homocysteine + H(+). Its function is as follows. Specifically methylates guanosine-37 in various tRNAs. The sequence is that of tRNA (guanine-N(1)-)-methyltransferase from Rhodospirillum rubrum (strain ATCC 11170 / ATH 1.1.1 / DSM 467 / LMG 4362 / NCIMB 8255 / S1).